The chain runs to 395 residues: ATP synthase subunit beta, chloroplastic (395 aa).

An ATP-binding site is contributed by 72 to 79; it reads GGAGVGKT.

The protein belongs to the ATPase alpha/beta chains family. F-type ATPases have 2 components, CF(1) - the catalytic core - and CF(0) - the membrane proton channel. CF(1) has five subunits: alpha(3), beta(3), gamma(1), delta(1), epsilon(1). CF(0) has four main subunits: a(1), b(1), b'(1) and c(9-12).

It is found in the plastid. Its subcellular location is the chloroplast thylakoid membrane. It carries out the reaction ATP + H2O + 4 H(+)(in) = ADP + phosphate + 5 H(+)(out). Its function is as follows. Produces ATP from ADP in the presence of a proton gradient across the membrane. The catalytic sites are hosted primarily by the beta subunits. This chain is ATP synthase subunit beta, chloroplastic, found in Microlepia platyphylla (Plate fern).